A 184-amino-acid polypeptide reads, in one-letter code: Photosystem I assembly protein Ycf4 (184 aa).

A run of 2 helical transmembrane segments spans residues 21–43 and 63–85; these read NYFWATVVFLGSLGFFIVGVSSY and GIVMCFYGIAGLFLSFYLWFTIF.

Belongs to the Ycf4 family.

It localises to the plastid. The protein resides in the chloroplast thylakoid membrane. Functionally, seems to be required for the assembly of the photosystem I complex. This is Photosystem I assembly protein Ycf4 from Chaetosphaeridium globosum (Charophycean green alga).